The primary structure comprises 399 residues: Formate-dependent phosphoribosylglycinamide formyltransferase (399 aa).

Residues 8 to 9 (EL) and Glu68 contribute to the N(1)-(5-phospho-beta-D-ribosyl)glycinamide site. Residues Arg100, Lys141, 146 to 151 (SSGHGQ), 185 to 188 (EALA), and Glu193 contribute to the ATP site. The region spanning 105–308 (VLAHEELGLP…EFALHARAIL (204 aa)) is the ATP-grasp domain. Positions 266 and 279 each coordinate Mg(2+). Residues Asp286, Lys361, and 368–369 (RR) contribute to the N(1)-(5-phospho-beta-D-ribosyl)glycinamide site.

The protein belongs to the PurK/PurT family. In terms of assembly, homodimer.

It carries out the reaction N(1)-(5-phospho-beta-D-ribosyl)glycinamide + formate + ATP = N(2)-formyl-N(1)-(5-phospho-beta-D-ribosyl)glycinamide + ADP + phosphate + H(+). It participates in purine metabolism; IMP biosynthesis via de novo pathway; N(2)-formyl-N(1)-(5-phospho-D-ribosyl)glycinamide from N(1)-(5-phospho-D-ribosyl)glycinamide (formate route): step 1/1. Functionally, involved in the de novo purine biosynthesis. Catalyzes the transfer of formate to 5-phospho-ribosyl-glycinamide (GAR), producing 5-phospho-ribosyl-N-formylglycinamide (FGAR). Formate is provided by PurU via hydrolysis of 10-formyl-tetrahydrofolate. In Bifidobacterium longum (strain NCC 2705), this protein is Formate-dependent phosphoribosylglycinamide formyltransferase.